Consider the following 138-residue polypeptide: Small ribosomal subunit protein uS11c (138 aa).

The segment at 1–23 (MAKPIPRIGSRRNGRIGSRKSAR) is disordered. The span at 9–23 (GSRRNGRIGSRKSAR) shows a compositional bias: basic residues.

Belongs to the universal ribosomal protein uS11 family. Part of the 30S ribosomal subunit.

Its subcellular location is the plastid. It is found in the chloroplast. This chain is Small ribosomal subunit protein uS11c, found in Vitis vinifera (Grape).